Here is a 320-residue protein sequence, read N- to C-terminus: ATP-dependent 6-phosphofructokinase (320 aa).

ATP is bound at residue Gly12. Residues 22–26 and 55–60 each bind ADP; these read RGVVR and RYSVSD. Residues 73–74 and 103–106 each bind ATP; these read RF and GDGS. Asp104 contacts Mg(2+). Residue 126–128 coordinates substrate; sequence TID. The active-site Proton acceptor is Asp128. Arg155 contributes to the ADP binding site. Substrate-binding positions include Arg163 and 170–172; that span reads MGR. ADP-binding positions include 186-188, Lys212, and 214-216; these read GCE and KKH. Residues Glu223, Arg244, and 250–253 contribute to the substrate site; that span reads HIQR.

The protein belongs to the phosphofructokinase type A (PFKA) family. ATP-dependent PFK group I subfamily. Prokaryotic clade 'B1' sub-subfamily. As to quaternary structure, homotetramer. It depends on Mg(2+) as a cofactor.

Its subcellular location is the cytoplasm. It carries out the reaction beta-D-fructose 6-phosphate + ATP = beta-D-fructose 1,6-bisphosphate + ADP + H(+). Its pathway is carbohydrate degradation; glycolysis; D-glyceraldehyde 3-phosphate and glycerone phosphate from D-glucose: step 3/4. With respect to regulation, allosterically activated by ADP and other diphosphonucleosides, and allosterically inhibited by phosphoenolpyruvate. Functionally, catalyzes the phosphorylation of D-fructose 6-phosphate to fructose 1,6-bisphosphate by ATP, the first committing step of glycolysis. The chain is ATP-dependent 6-phosphofructokinase from Buchnera aphidicola subsp. Acyrthosiphon pisum (strain 5A).